A 212-amino-acid chain; its full sequence is Putative aryl-alcohol dehydrogenase AAD6 (212 aa).

The active-site Proton donor is the Tyr-76.

The protein belongs to the aldo/keto reductase family. Aldo/keto reductase 2 subfamily.

This chain is Putative aryl-alcohol dehydrogenase AAD6, found in Saccharomyces cerevisiae (strain ATCC 204508 / S288c) (Baker's yeast).